Consider the following 567-residue polypeptide: Signal transducer and activator of transcription b (567 aa).

The region spanning 449–548 (WYDGLVYGFC…LGGRNKPRIR (100 aa)) is the SH2 domain.

It belongs to the transcription factor STAT family. In terms of assembly, may interact with sodium-dependent transporter snf-12; the interaction is probably direct.

The protein resides in the cytoplasm. It is found in the nucleus. The protein localises to the vesicle. Carries out a dual function: signal transduction and activation of transcription. Required, in concert with transcription factor elt-3, for up-regulation of the vacuolar H(+)-ATPase and acceleration of lysosome maturation at molt. As part of the innate immune response to molting and injury of the adult epidermis, positively regulates the expression of epidermal antimicrobial peptides, such as nlp-29. Through positively modulating the expression of epidermal antimicrobial peptides, such as nlp-29, plays a role in resistance to fungal infection and in the response to physical wounding and phorbol ester PMA treatment. Functions cell autonomously in the epidermis, in concert with sodium-dependent transporter snf-12, probably acting at vesicular membranes, downstream of a p38 MAPK/pmk-1 pathway. This is Signal transducer and activator of transcription b from Caenorhabditis elegans.